The following is a 268-amino-acid chain: UDP-2,3-diacylglucosamine hydrolase (268 aa).

Residues aspartate 25, histidine 27, aspartate 58, asparagine 97, and histidine 132 each coordinate Mn(2+). Residue 97 to 98 (NR) coordinates substrate. Substrate contacts are provided by aspartate 140, serine 178, glutamate 191, and histidine 222. Residues histidine 222 and histidine 224 each contribute to the Mn(2+) site.

Belongs to the LpxH family. The cofactor is Mn(2+).

The protein resides in the cell inner membrane. It catalyses the reaction UDP-2-N,3-O-bis[(3R)-3-hydroxytetradecanoyl]-alpha-D-glucosamine + H2O = 2-N,3-O-bis[(3R)-3-hydroxytetradecanoyl]-alpha-D-glucosaminyl 1-phosphate + UMP + 2 H(+). It participates in glycolipid biosynthesis; lipid IV(A) biosynthesis; lipid IV(A) from (3R)-3-hydroxytetradecanoyl-[acyl-carrier-protein] and UDP-N-acetyl-alpha-D-glucosamine: step 4/6. Its function is as follows. Hydrolyzes the pyrophosphate bond of UDP-2,3-diacylglucosamine to yield 2,3-diacylglucosamine 1-phosphate (lipid X) and UMP by catalyzing the attack of water at the alpha-P atom. Involved in the biosynthesis of lipid A, a phosphorylated glycolipid that anchors the lipopolysaccharide to the outer membrane of the cell. In Ralstonia nicotianae (strain ATCC BAA-1114 / GMI1000) (Ralstonia solanacearum), this protein is UDP-2,3-diacylglucosamine hydrolase.